The following is a 343-amino-acid chain: Transcription factor BPE (343 aa).

In terms of domain architecture, bHLH spans 142–192 (QATDSHSLAERARREKISERMKILQDLVPGCNKVIGKALVLDEIINYIQSL).

Homodimer. As to expression, specifically expressed in flowers, mostly in petals, inflorescence and flower buds. Expressed ubiquitously (leaves, flowers and stems).

Its subcellular location is the nucleus. Involved in the control of petal size, by interfering with postmitotic cell expansion to limit final petal cell size. In Arabidopsis thaliana (Mouse-ear cress), this protein is Transcription factor BPE (BPE).